A 170-amino-acid polypeptide reads, in one-letter code: MARVEL domain-containing protein 1 (170 aa).

Residues 1-38 lie on the Cytoplasmic side of the membrane; the sequence is MEGERPRSDTVTTTVSSHMETISLGGSIAYDRSFLRSP. An MARVEL domain is found at 34–167; the sequence is FLRSPTGVLL…STYFSFQAWR (134 aa). Residues 39-59 traverse the membrane as a helical segment; it reads TGVLLLMEIMFGLLVWALIAG. Residues 60-67 are Extracellular-facing; sequence SEYFLFSA. A helical membrane pass occupies residues 68 to 88; the sequence is FGWVMFVAVFYWVLSVFFFLL. The Cytoplasmic segment spans residues 89–102; it reads HLTRANTRITKVPW. The chain crosses the membrane as a helical span at residues 103 to 123; the sequence is SLVGLCFNGSAFVLYLIAAVV. The Extracellular portion of the chain corresponds to 124-145; it reads EASSVNKDVHQHHNYNSWTASS. A helical transmembrane segment spans residues 146 to 166; the sequence is FFAFIVTVCYALSTYFSFQAW. Residues 167-170 are Cytoplasmic-facing; the sequence is RTKS.

Its subcellular location is the membrane. The protein localises to the nucleus. The chain is MARVEL domain-containing protein 1 (marveld1) from Xenopus laevis (African clawed frog).